Reading from the N-terminus, the 450-residue chain is 23S rRNA (uracil(1939)-C(5))-methyltransferase RlmD (450 aa).

One can recognise a TRAM domain in the interval 1–62; sequence MPVAGPLDIV…PSYEQAGVVN (62 aa). The [4Fe-4S] cluster site is built by C75, C81, C84, and C163. 6 residues coordinate S-adenosyl-L-methionine: Q271, F300, N305, E321, N349, and D370. C406 acts as the Nucleophile in catalysis.

The protein belongs to the class I-like SAM-binding methyltransferase superfamily. RNA M5U methyltransferase family. RlmD subfamily.

The catalysed reaction is uridine(1939) in 23S rRNA + S-adenosyl-L-methionine = 5-methyluridine(1939) in 23S rRNA + S-adenosyl-L-homocysteine + H(+). In terms of biological role, catalyzes the formation of 5-methyl-uridine at position 1939 (m5U1939) in 23S rRNA. The sequence is that of 23S rRNA (uracil(1939)-C(5))-methyltransferase RlmD from Ralstonia pickettii (strain 12J).